The sequence spans 517 residues: Nicotine N-demethylase CYP82E4 (517 aa).

A helical transmembrane segment spans residues 2–22 (LSPIEAIVGLVTFTFLFYFLW). Lysine 254 participates in a covalent cross-link: Glycyl lysine isopeptide (Lys-Gly) (interchain with G-Cter in ubiquitin). A heme-binding site is contributed by cysteine 457.

It belongs to the cytochrome P450 family. CYP82E2 subfamily. It depends on heme as a cofactor. As to expression, expressed in leaves.

The protein resides in the membrane. The enzyme catalyses (S)-nicotine + reduced [NADPH--hemoprotein reductase] + O2 = (S)-nornicotine + formaldehyde + oxidized [NADPH--hemoprotein reductase] + H2O + H(+). It participates in alkaloid biosynthesis; nicotine biosynthesis. Functionally, involved in the biosynthesis of pyridine alkaloid natural products, leading mainly to the production of anabasine, anatabine, nicotine and nornicotine, effective deterrents against herbivores with antiparasitic and pesticide properties (neurotoxins); nornicotine serves as the precursor in the synthesis of the carcinogen compound N'-nitrosonornicotine (NNN). Catalyzes the demethylation of nicotine to form nornicotine. The chain is Nicotine N-demethylase CYP82E4 from Nicotiana tomentosiformis (Tobacco).